Here is a 427-residue protein sequence, read N- to C-terminus: 3-phosphoshikimate 1-carboxyvinyltransferase (427 aa).

3-phosphoshikimate contacts are provided by Lys-22, Ser-23, and Arg-27. Lys-22 is a binding site for phosphoenolpyruvate. Phosphoenolpyruvate-binding residues include Gly-96 and Arg-124. The 3-phosphoshikimate site is built by Ser-169, Ser-170, Gln-171, Ser-197, Asp-313, Asn-336, and Lys-340. Position 171 (Gln-171) interacts with phosphoenolpyruvate. Asp-313 serves as the catalytic Proton acceptor. Arg-344, Arg-386, and Lys-411 together coordinate phosphoenolpyruvate.

This sequence belongs to the EPSP synthase family. As to quaternary structure, monomer.

It is found in the cytoplasm. The enzyme catalyses 3-phosphoshikimate + phosphoenolpyruvate = 5-O-(1-carboxyvinyl)-3-phosphoshikimate + phosphate. Its pathway is metabolic intermediate biosynthesis; chorismate biosynthesis; chorismate from D-erythrose 4-phosphate and phosphoenolpyruvate: step 6/7. Catalyzes the transfer of the enolpyruvyl moiety of phosphoenolpyruvate (PEP) to the 5-hydroxyl of shikimate-3-phosphate (S3P) to produce enolpyruvyl shikimate-3-phosphate and inorganic phosphate. The sequence is that of 3-phosphoshikimate 1-carboxyvinyltransferase from Salmonella paratyphi A (strain ATCC 9150 / SARB42).